The sequence spans 131 residues: MYNKVIAIGRLVAKPELVKTATDKHVARLSLAVNRRFKNASGEREADFISVVVWGKLAETLVSYASKGSLMSIDGELRTRKYDKDGQVHYVTEVLCQSFQLLESRAQRAMRENNVTNDLVDLVLEEDTLPF.

Positions 1–103 constitute an SSB domain; the sequence is MYNKVIAIGR…VLCQSFQLLE (103 aa).

As to quaternary structure, homotetramer.

This Streptococcus pyogenes serotype M6 (strain ATCC BAA-946 / MGAS10394) protein is Single-stranded DNA-binding protein 1 (ssb1).